Consider the following 461-residue polypeptide: GTPase Der (461 aa).

EngA-type G domains follow at residues isoleucine 2–proline 166 and isoleucine 199–serine 370. GTP is bound by residues glycine 8–serine 15, aspartate 57–leucine 61, asparagine 118–aspartate 121, glycine 205–serine 212, aspartate 252–isoleucine 256, and asparagine 316–aspartate 319. The 85-residue stretch at lysine 371–glycine 455 folds into the KH-like domain.

Belongs to the TRAFAC class TrmE-Era-EngA-EngB-Septin-like GTPase superfamily. EngA (Der) GTPase family. Associates with the 50S ribosomal subunit.

Functionally, GTPase that plays an essential role in the late steps of ribosome biogenesis. This is GTPase Der from Nautilia profundicola (strain ATCC BAA-1463 / DSM 18972 / AmH).